The chain runs to 87 residues: LYR motif-containing protein 2 (87 aa).

A mitochondrion-targeting transit peptide spans 1–19; sequence MGSRLPPAALTLKQFLVRQ.

This sequence belongs to the complex I LYR family.

The protein localises to the mitochondrion. In terms of biological role, involved in efficient integration of the N-module into mitochondrial respiratory chain complex I. The polypeptide is LYR motif-containing protein 2 (lyrm2) (Xenopus laevis (African clawed frog)).